A 502-amino-acid polypeptide reads, in one-letter code: Mannitol 2-dehydrogenase (502 aa).

35-46 (IVHVGVGGFHRA) is an NAD(+) binding site.

The protein belongs to the mannitol dehydrogenase family. As to quaternary structure, monomer.

The catalysed reaction is D-mannitol + NAD(+) = D-fructose + NADH + H(+). Its function is as follows. Catalyzes the NAD(H)-dependent interconversion of D-fructose and D-mannitol in the mannitol metabolic pathway. The chain is Mannitol 2-dehydrogenase from Pyricularia oryzae (strain 70-15 / ATCC MYA-4617 / FGSC 8958) (Rice blast fungus).